Here is a 157-residue protein sequence, read N- to C-terminus: Large ribosomal subunit protein eL29 (157 aa).

The segment covering 1–26 (MAKSKNHTTHNQSRKWHRNGIKKPRS) has biased composition (basic residues). The disordered stretch occupies residues 1–32 (MAKSKNHTTHNQSRKWHRNGIKKPRSQRYESL). K5 is modified (N6-methyllysine). The residue at position 31 (S31) is a Phosphoserine. An N6-acetyllysine modification is found at K33. Residues 121–157 (PKAKAKAKDQTKAQAAAPASIPAQAPKGAQATTKATE) form a disordered region. Low complexity predominate over residues 132-147 (KAQAAAPASIPAQAPK). Position 140 is a phosphoserine (S140).

This sequence belongs to the eukaryotic ribosomal protein eL29 family. In terms of assembly, component of the large ribosomal subunit.

It localises to the cytoplasm. Its function is as follows. Component of the large ribosomal subunit. The ribosome is a large ribonucleoprotein complex responsible for the synthesis of proteins in the cell. This Macaca fascicularis (Crab-eating macaque) protein is Large ribosomal subunit protein eL29 (RPL29).